The following is a 139-amino-acid chain: Nucleoside diphosphate kinase (139 aa).

Lys10, Phe58, Arg86, Thr92, Arg103, and Asn113 together coordinate ATP. His116 functions as the Pros-phosphohistidine intermediate in the catalytic mechanism.

This sequence belongs to the NDK family. As to quaternary structure, homotetramer. Mg(2+) serves as cofactor.

The protein localises to the cytoplasm. It carries out the reaction a 2'-deoxyribonucleoside 5'-diphosphate + ATP = a 2'-deoxyribonucleoside 5'-triphosphate + ADP. It catalyses the reaction a ribonucleoside 5'-diphosphate + ATP = a ribonucleoside 5'-triphosphate + ADP. Its function is as follows. Major role in the synthesis of nucleoside triphosphates other than ATP. The ATP gamma phosphate is transferred to the NDP beta phosphate via a ping-pong mechanism, using a phosphorylated active-site intermediate. The protein is Nucleoside diphosphate kinase of Oleidesulfovibrio alaskensis (strain ATCC BAA-1058 / DSM 17464 / G20) (Desulfovibrio alaskensis).